A 457-amino-acid polypeptide reads, in one-letter code: Putative ankyrin repeat protein L112 (457 aa).

ANK repeat units lie at residues Q62–P91, S104–N132, S133–N162, Y193–S219, I220–K249, K251–E279, N281–T309, R310–S339, N341–Q368, N400–P429, and K431–K457.

This is Putative ankyrin repeat protein L112 from Acanthamoeba polyphaga mimivirus (APMV).